A 451-amino-acid polypeptide reads, in one-letter code: Aminodeoxychorismate synthase component 1 (451 aa).

L-tryptophan is bound by residues serine 34, 41–44, and 238–240; these read HNRF and PFS. The active-site Proton donor is glutamate 256. Lysine 272 (N6-(4-deoxychorismate)-lysine intermediate) is an active-site residue.

This sequence belongs to the anthranilate synthase component I family. Monomer. Heterodimer consisting of two non-identical subunits: a glutamine amidotransferase subunit (PabA) and a aminodeoxychorismate synthase subunit (PabB). Mg(2+) is required as a cofactor.

It catalyses the reaction chorismate + L-glutamine = 4-amino-4-deoxychorismate + L-glutamate. It functions in the pathway cofactor biosynthesis; tetrahydrofolate biosynthesis; 4-aminobenzoate from chorismate: step 1/2. Part of a heterodimeric complex that catalyzes the two-step biosynthesis of 4-amino-4-deoxychorismate (ADC), a precursor of p-aminobenzoate (PABA) and tetrahydrofolate. In the first step, a glutamine amidotransferase (PabA) generates ammonia as a substrate that, along with chorismate, is used in the second step, catalyzed by aminodeoxychorismate synthase (PabB) to produce ADC. This chain is Aminodeoxychorismate synthase component 1 (pabB), found in Klebsiella aerogenes (Enterobacter aerogenes).